A 608-amino-acid polypeptide reads, in one-letter code: Protein trichome birefringence (608 aa).

The chain crosses the membrane as a helical; Signal-anchor for type II membrane protein span at residues 38–58 (TFAYAFVITFVSFTLFFAFSP). Polar residues-rich tracts occupy residues 101–137 (STKP…QTPA) and 145–203 (AKNT…TSPA). Residues 101 to 236 (STKPTNRSSD…TPKKQTKTVD (136 aa)) form a disordered region. Over residues 215 to 227 (TNSSSNSSTASST) the composition is skewed to low complexity. The GDS motif motif lies at 328 to 330 (GDS). A DCXHWCLPGXXDXWN motif motif is present at residues 573-587 (DCSHWCLPGVPDSWN).

This sequence belongs to the PC-esterase family. TBL subfamily. In terms of tissue distribution, expressed in leaf vasculature, growing part of the root, expanding inflorescence stems and trichomes.

It localises to the membrane. Its function is as follows. Required during cellulose deposition. May act as a bridging protein that binds pectin and other cell wall polysaccharides. Probably involved in maintaining esterification of pectins. May be involved in the specific O-acetylation of cell wall polymers. The protein is Protein trichome birefringence (TBR) of Arabidopsis thaliana (Mouse-ear cress).